Consider the following 684-residue polypeptide: Poly(A) RNA polymerase cid14 (684 aa).

3 disordered regions span residues 1 to 52 (MGKK…DAYD), 64 to 127 (DQEE…KRGE), and 161 to 219 (WNSD…QAYE). Composition is skewed to basic and acidic residues over residues 19-35 (ERTE…DKPS), 73-91 (GSKK…DKGG), 108-127 (DPLE…KRGE), 171-186 (SNDK…KSSK), and 199-210 (FFHEANEKSDSN). The Mg(2+) site is built by Asp-298 and Asp-300. Positions 364, 389, 407, 408, 492, and 496 each coordinate ATP. A PAP-associated domain is found at 434–492 (NFGVLLLEFLELYGKQFYYDAVGIAVHNGGFYFSKKKMGWLKPNQPYLLSIQDPVDFQN). Positions 623–684 (GHENFQKQAL…SRAKKIRKRF (62 aa)) are disordered. Polar residues predominate over residues 628 to 655 (QKQALTSTGEQSSSNSRANPSKLFNISS). Residues 656–672 (DDSEDEVPIIEDTTASD) are compositionally biased toward acidic residues.

The protein belongs to the DNA polymerase type-B-like family. Heterooligomer. Component of the TRAMP complex composed of at least cid14, mtr4, and air1. Mg(2+) serves as cofactor. Requires Mn(2+) as cofactor.

The protein localises to the nucleus. Its subcellular location is the nucleolus. It catalyses the reaction RNA(n) + ATP = RNA(n)-3'-adenine ribonucleotide + diphosphate. In terms of biological role, required for 3' polyadenylation of the 5.8S and 25S rRNAs as a prelude to their degradation in the exosome. Involved in the nucleolar organization to ensure faithful chromosome segregation during mitosis. This chain is Poly(A) RNA polymerase cid14 (cid14), found in Schizosaccharomyces pombe (strain 972 / ATCC 24843) (Fission yeast).